The following is a 178-amino-acid chain: UPF0114 protein HPSH_00970 (178 aa).

The next 4 helical transmembrane spans lie at 15-35, 54-74, 102-122, and 145-165; these read WLLA…GYVF, LVLS…VLMV, FNAL…IFLL, and PIFW…LAAV.

It belongs to the UPF0114 family.

The protein resides in the cell membrane. The polypeptide is UPF0114 protein HPSH_00970 (Helicobacter pylori (strain Shi470)).